A 75-amino-acid chain; its full sequence is Protein BsdD (75 aa).

Its function is as follows. Involved in the non-oxidative decarboxylation and detoxification of phenolic derivatives under both aerobic and anaerobic conditions, however the precise biochemical function of BsdD in metabolism of phenolic acid is unknown. This is Protein BsdD from Bacillus subtilis (strain 168).